The chain runs to 234 residues: Large ribosomal subunit protein uL1 (234 aa).

This sequence belongs to the universal ribosomal protein uL1 family. In terms of assembly, part of the 50S ribosomal subunit.

Binds directly to 23S rRNA. The L1 stalk is quite mobile in the ribosome, and is involved in E site tRNA release. Functionally, protein L1 is also a translational repressor protein, it controls the translation of the L11 operon by binding to its mRNA. This chain is Large ribosomal subunit protein uL1, found in Anaeromyxobacter dehalogenans (strain 2CP-1 / ATCC BAA-258).